Here is a 293-residue protein sequence, read N- to C-terminus: Bifunctional protein FolD (293 aa).

NADP(+) is bound by residues 166 to 168 (GRS), Ser-191, and Ile-232.

It belongs to the tetrahydrofolate dehydrogenase/cyclohydrolase family. In terms of assembly, homodimer.

The catalysed reaction is (6R)-5,10-methylene-5,6,7,8-tetrahydrofolate + NADP(+) = (6R)-5,10-methenyltetrahydrofolate + NADPH. The enzyme catalyses (6R)-5,10-methenyltetrahydrofolate + H2O = (6R)-10-formyltetrahydrofolate + H(+). Its pathway is one-carbon metabolism; tetrahydrofolate interconversion. Functionally, catalyzes the oxidation of 5,10-methylenetetrahydrofolate to 5,10-methenyltetrahydrofolate and then the hydrolysis of 5,10-methenyltetrahydrofolate to 10-formyltetrahydrofolate. This chain is Bifunctional protein FolD, found in Synechococcus sp. (strain JA-2-3B'a(2-13)) (Cyanobacteria bacterium Yellowstone B-Prime).